We begin with the raw amino-acid sequence, 496 residues long: Cytochrome P450 71D180 (496 aa).

A helical; Signal-anchor for type II membrane protein membrane pass occupies residues 1–21 (MDISISWVVIIVFVLSYLILM). Cys-435 is a binding site for heme. Positions 471–496 (MSETPGLSGPRKNPLIMIPTIHNPTS) are disordered.

Belongs to the cytochrome P450 family. It depends on heme as a cofactor. Mostly expressed in flowers and stems, and, to a lower extent, in leaves.

The protein localises to the membrane. The catalysed reaction is gamma-terpinene + 2 reduced [NADPH--hemoprotein reductase] + 2 O2 = carvacrol + 2 oxidized [NADPH--hemoprotein reductase] + 3 H2O + 2 H(+). It carries out the reaction (4S)-limonene + reduced [NADPH--hemoprotein reductase] + O2 = (1S,5R)-carveol + oxidized [NADPH--hemoprotein reductase] + H2O + H(+). The enzyme catalyses (4R)-limonene + reduced [NADPH--hemoprotein reductase] + O2 = (1R,5S)-carveol + oxidized [NADPH--hemoprotein reductase] + H2O + H(+). It functions in the pathway secondary metabolite biosynthesis; terpenoid biosynthesis. In terms of biological role, involved in the biosynthesis of phenolic monoterpenes natural products thymol and carvacrol which have a broad range of biological activities acting as antimicrobial compounds, insecticides, antioxidants and pharmaceutical agents. Catalyzes the C2-hydroxylation of gamma-terpinene to produce carvacrol. Also mediates the C6-hydroxylation of (4S)-limonene and (4R)-limonene to form carveol. The protein is Cytochrome P450 71D180 of Origanum vulgare (Wild marjoram).